The following is a 159-amino-acid chain: Ribosomal RNA large subunit methyltransferase H (159 aa).

S-adenosyl-L-methionine is bound by residues L76, G108, and 127-132; that span reads FGRMTL.

The protein belongs to the RNA methyltransferase RlmH family. Homodimer.

It is found in the cytoplasm. The enzyme catalyses pseudouridine(1915) in 23S rRNA + S-adenosyl-L-methionine = N(3)-methylpseudouridine(1915) in 23S rRNA + S-adenosyl-L-homocysteine + H(+). Specifically methylates the pseudouridine at position 1915 (m3Psi1915) in 23S rRNA. This Lactococcus lactis subsp. cremoris (strain SK11) protein is Ribosomal RNA large subunit methyltransferase H.